Reading from the N-terminus, the 440-residue chain is Adenosylhomocysteinase (440 aa).

Substrate is bound by residues Thr-64, Asp-139, and Glu-164. Position 165-167 (165-167) interacts with NAD(+); sequence TTT. Substrate is bound by residues Lys-194 and Asp-198. Residues Asn-199, 228-233, Glu-251, Asn-286, 307-309, and Asn-352 each bind NAD(+); these read GFGDVG and IGH.

The protein belongs to the adenosylhomocysteinase family. NAD(+) serves as cofactor.

The protein localises to the cytoplasm. It carries out the reaction S-adenosyl-L-homocysteine + H2O = L-homocysteine + adenosine. The protein operates within amino-acid biosynthesis; L-homocysteine biosynthesis; L-homocysteine from S-adenosyl-L-homocysteine: step 1/1. Its function is as follows. May play a key role in the regulation of the intracellular concentration of adenosylhomocysteine. The chain is Adenosylhomocysteinase from Granulibacter bethesdensis (strain ATCC BAA-1260 / CGDNIH1).